The primary structure comprises 227 residues: Ion-translocating oxidoreductase complex subunit E (227 aa).

5 consecutive transmembrane segments (helical) span residues 34 to 56, 68 to 88, 91 to 111, 127 to 147, and 181 to 201; these read AINAIGLGMTTTLVLTITNTIIS, IPIYMMIISSVVTSIEMLLHA, FNLYQSLGIFIPLIVTNCIIV, FFDGIFIGLGSMFAMFAVGSI, and TIILAVFPPGGFLILGFLIAI.

It belongs to the NqrDE/RnfAE family. In terms of assembly, the complex is composed of six subunits: RnfA, RnfB, RnfC, RnfD, RnfE and RnfG.

The protein resides in the cell inner membrane. Functionally, part of a membrane-bound complex that couples electron transfer with translocation of ions across the membrane. This is Ion-translocating oxidoreductase complex subunit E from Buchnera aphidicola subsp. Acyrthosiphon pisum (strain APS) (Acyrthosiphon pisum symbiotic bacterium).